The following is a 167-amino-acid chain: uncharacterized protein (167 aa).

This is an uncharacterized protein from Xenopus laevis (African clawed frog).